We begin with the raw amino-acid sequence, 360 residues long: UDP-N-acetylglucosamine--N-acetylmuramyl-(pentapeptide) pyrophosphoryl-undecaprenol N-acetylglucosamine transferase (360 aa).

2 residues coordinate UDP-N-acetyl-alpha-D-glucosamine: serine 198 and glutamine 289.

It belongs to the glycosyltransferase 28 family. MurG subfamily.

It localises to the cell membrane. The catalysed reaction is Mur2Ac(oyl-L-Ala-gamma-D-Glu-L-Lys-D-Ala-D-Ala)-di-trans,octa-cis-undecaprenyl diphosphate + UDP-N-acetyl-alpha-D-glucosamine = beta-D-GlcNAc-(1-&gt;4)-Mur2Ac(oyl-L-Ala-gamma-D-Glu-L-Lys-D-Ala-D-Ala)-di-trans,octa-cis-undecaprenyl diphosphate + UDP + H(+). The protein operates within cell wall biogenesis; peptidoglycan biosynthesis. Functionally, cell wall formation. Catalyzes the transfer of a GlcNAc subunit on undecaprenyl-pyrophosphoryl-MurNAc-pentapeptide (lipid intermediate I) to form undecaprenyl-pyrophosphoryl-MurNAc-(pentapeptide)GlcNAc (lipid intermediate II). This Streptococcus pyogenes serotype M12 (strain MGAS2096) protein is UDP-N-acetylglucosamine--N-acetylmuramyl-(pentapeptide) pyrophosphoryl-undecaprenol N-acetylglucosamine transferase.